Consider the following 645-residue polypeptide: Glucans biosynthesis glucosyltransferase H (645 aa).

The segment at 1–28 is disordered; sequence MDGTVTLSPAPTDLPPVSSLDAGQPTLP. Transmembrane regions (helical) follow at residues 64–84, 98–118, 423–443, 465–485, 504–524, 558–578, and 580–600; these read LIGG…SVLW, LFVL…AGFI, APMW…GAGI, AIWI…LGYI, ALSI…VMYL, SYGG…LVSP, and LAAW…VVAV.

It belongs to the glycosyltransferase 2 family. OpgH subfamily.

Its subcellular location is the cell inner membrane. The protein operates within glycan metabolism; osmoregulated periplasmic glucan (OPG) biosynthesis. Involved in the biosynthesis of osmoregulated periplasmic glucans (OPGs). The polypeptide is Glucans biosynthesis glucosyltransferase H (Xanthomonas campestris pv. campestris (strain B100)).